The chain runs to 526 residues: Na(+)/H(+) antiporter NhaB (526 aa).

13 helical membrane passes run Phe-14–Pro-34, Leu-35–Phe-55, Met-99–Phe-119, Leu-122–Phe-142, Phe-146–Ile-166, Leu-206–Pro-226, Phe-239–Leu-259, Ala-307–Ile-327, Gly-328–Gly-348, Phe-357–Phe-377, Tyr-397–Ile-417, Ala-451–Ile-471, and Val-479–Phe-499.

Belongs to the NhaB Na(+)/H(+) (TC 2.A.34) antiporter family.

The protein localises to the cell inner membrane. The enzyme catalyses 2 Na(+)(in) + 3 H(+)(out) = 2 Na(+)(out) + 3 H(+)(in). Functionally, na(+)/H(+) antiporter that extrudes sodium in exchange for external protons. In Pectobacterium atrosepticum (strain SCRI 1043 / ATCC BAA-672) (Erwinia carotovora subsp. atroseptica), this protein is Na(+)/H(+) antiporter NhaB.